We begin with the raw amino-acid sequence, 360 residues long: Phospho-N-acetylmuramoyl-pentapeptide-transferase (360 aa).

10 consecutive transmembrane segments (helical) span residues 26 to 46, 74 to 94, 97 to 117, 132 to 152, 168 to 188, 199 to 219, 236 to 256, 263 to 283, 288 to 308, and 338 to 358; these read AILA…KLIE, MGGL…GDLG, YVWV…IDDY, WKYI…FYST, ILPQ…VGAS, GLAI…AYLS, SGEL…FLWF, VFMG…IAVL, ILLV…ILQV, and VIVR…ATLK.

It belongs to the glycosyltransferase 4 family. MraY subfamily. Requires Mg(2+) as cofactor.

The protein resides in the cell inner membrane. It carries out the reaction UDP-N-acetyl-alpha-D-muramoyl-L-alanyl-gamma-D-glutamyl-meso-2,6-diaminopimeloyl-D-alanyl-D-alanine + di-trans,octa-cis-undecaprenyl phosphate = di-trans,octa-cis-undecaprenyl diphospho-N-acetyl-alpha-D-muramoyl-L-alanyl-D-glutamyl-meso-2,6-diaminopimeloyl-D-alanyl-D-alanine + UMP. The protein operates within cell wall biogenesis; peptidoglycan biosynthesis. Catalyzes the initial step of the lipid cycle reactions in the biosynthesis of the cell wall peptidoglycan: transfers peptidoglycan precursor phospho-MurNAc-pentapeptide from UDP-MurNAc-pentapeptide onto the lipid carrier undecaprenyl phosphate, yielding undecaprenyl-pyrophosphoryl-MurNAc-pentapeptide, known as lipid I. In Shewanella amazonensis (strain ATCC BAA-1098 / SB2B), this protein is Phospho-N-acetylmuramoyl-pentapeptide-transferase.